Here is a 131-residue protein sequence, read N- to C-terminus: Small ribosomal subunit protein uS8 (131 aa).

The protein belongs to the universal ribosomal protein uS8 family. In terms of assembly, part of the 30S ribosomal subunit. Contacts proteins S5 and S12.

Functionally, one of the primary rRNA binding proteins, it binds directly to 16S rRNA central domain where it helps coordinate assembly of the platform of the 30S subunit. This chain is Small ribosomal subunit protein uS8, found in Ralstonia pickettii (strain 12J).